The sequence spans 872 residues: Adhesive plaque matrix protein (872 aa).

Positions 1 to 20 (MEGIKLNLCLLCIFSCDIFA) are cleaved as a signal peptide. The nonrepetitive linker stretch occupies residues 21 to 41 (LSNGNIHNVYGSAYSGASAGA). 69 consecutive repeat copies span residues 124–133 (YKAKTSYPPS), 134–143 (YKHKITYPPT), 144–153 (YKPKITYPPT), 154–163 (YKQKPSYPPS), 174–183 (YKPKITYPPT), 184–192 (YKRKPSYTP), 193–202 (YKPKATYPPT), 203–212 (YKPKITYPPT), 213–221 (YKRKPSYTP), 222–231 (YKPKTTYPPT), 232–241 (YKPKISYPSI), 242–251 (YKPKASYVSS), 252–261 (YKSKKTYPPT), 262–271 (YKPKISYPPT), 272–281 (YKPKPSYPPT), 282–291 (YKPKVTYPPT), 292–301 (YKPKPSYPPT), 302–311 (YKPKITYPPT), 312–321 (YKPKPSYPTP), 322–331 (YKQKPSYPPI), 332–341 (YKSKSSYPTS), 342–351 (YKSKKTYPPT), 352–361 (YKPKITYPPT), 362–371 (YKPKPSYPPS), 372–381 (YKPKKTYSPT), 382–391 (YKPKITYPPT), 402–411 (YKPKTTYPPT), 412–421 (YKPKISYPPT), 422–431 (YKPKASYVSS), 432–441 (YKSKKTYPPT), 442–451 (YKPKISYPPT), 452–461 (YKPKPSYPPT), 462–471 (YKPKITYPPT), 472–481 (YKPKPSYPPT), 482–491 (YKPKITYPPT), 502–511 (YKQKPSYPPI), 512–521 (YKSKSSYPTS), 522–531 (YKSKKTYPPT), 532–541 (YKPKITYPPT), 542–551 (YKPKPSYPPS), 552–561 (YKPKTTYPPT), 562–571 (YKPKIRYPPT), 572–581 (YKPKASYPPT), 582–591 (YKPKITYPPT), 602–611 (YKQKPSYPPI), 612–621 (YKSKSSYPTA), 622–631 (YKSKKTYPPT), 632–641 (YKPKITYPPT), 642–651 (YKPKPSYPPS), 652–661 (YRPKITYPPT), 662–671 (YKPKKSYPQA), 672–681 (YKSKGSYPPS), 682–691 (YQPKKTYPPS), 702–711 (YKPKISYPPT), 712–721 (YKTKPSYPAS), 722–731 (YKRKTSYPPT), 732–741 (YKPKISYPST), 742–751 (YKAKPSYPPT), 752–761 (YKPKPSYASS), 762–771 (YKPKIRYPPT), 772–781 (YKPKPSYASS), 782–791 (YKPKIRYPPT), 792–801 (YKPKPSYASS), 812–821 (YKPKPSYASS), 822–831 (YKPKITYPPT), 832–841 (YKPKISYPPT), 842–851 (YKPKITYPPT), 852–861 (YKPKISYPPA), and 862–871 (YKPKISYPSQ). Positions 124 to 871 (YKAKTSYPPS…YKPKISYPSQ (748 aa)) are 69 X 10 AA tandem repeats of Y-[KRQ]-[PSTAHQR]-K-[AIPTSKGV]-[STR]-Y-[PTSVA]-[PSTQA]-[STYIPAQ]. The nonapeptide 1 stretch occupies residues 184-192 (YKRKPSYTP). A nonapeptide 2 region spans residues 213–221 (YKRKPSYTP). Pro residues-rich tracts occupy residues 273-282 (KPKPSYPPTY) and 291-302 (TYKPKPSYPPTY). The segment at 273–781 (KPKPSYPPTY…YKPKPSYASS (509 aa)) is disordered. Residues 320–360 (TPYKQKPSYPPIYKSKSSYPTSYKSKKTYPPTYKPKITYPP) show a composition bias toward low complexity. The span at 361-372 (TYKPKPSYPPSY) shows a compositional bias: pro residues. Over residues 377–390 (TYSPTYKPKITYPP) the composition is skewed to low complexity. The segment covering 391-402 (TYKPKPSYPPSY) has biased composition (pro residues). Positions 403–450 (KPKTTYPPTYKPKISYPPTYKPKASYVSSYKSKKTYPPTYKPKISYPP) are enriched in low complexity. Pro residues-rich tracts occupy residues 451 to 462 (TYKPKPSYPPTY) and 471 to 482 (TYKPKPSYPPTY). A compositionally biased stretch (low complexity) spans 501 to 540 (PYKQKPSYPPIYKSKSSYPTSYKSKKTYPPTYKPKITYPP). Residues 541-552 (TYKPKPSYPPSY) are compositionally biased toward pro residues. 2 stretches are compositionally biased toward low complexity: residues 568 to 590 (YPPT…TYPP) and 600 to 640 (TPYK…TYPP). Residues 641-652 (TYKPKPSYPPSY) are compositionally biased toward pro residues. Composition is skewed to low complexity over residues 677-690 (SYPP…TYPP) and 698-719 (YPPT…PSYP). Residues 754 to 763 (PKPSYASSYK) are compositionally biased toward low complexity.

Post-translationally, hydroxylated on proline (mono- or dihydroxylation) and tyrosine residues (to L-DOPA = 3',4'-dihydroxyphenylalanine) of the tandem repeats. As to expression, produced by the byssal gland.

The protein resides in the secreted. Provides adhesiveness to the mussel's foot. Mussels produce one of the strongest water insoluble glues. The mussel's adhesive is a bundle of threads, called a byssus, formed by a fibrous collagenous core coated with adhesive proteins. The protein is Adhesive plaque matrix protein (FP1) of Mytilus coruscus (Sea mussel).